Consider the following 165-residue polypeptide: MFTVKEKNRQELEEELNDLEFQIYRMQENMKDLSKDAKVLGIDQSKHDEWMIVSSIDDGQTCKIMLTDCKTAYRGKGCFSLVASYKDDAIHIGDIKGPPNHGFGSICMKYLKDIARDHNIPKVTGDIAKRDWNHVDRLIHFYEKHHFKVCIDHDTQSGSIKWVDL.

Positions 1-38 (MFTVKEKNRQELEEELNDLEFQIYRMQENMKDLSKDAK) form a coiled coil.

This is an uncharacterized protein from Bacillus subtilis (strain 168).